We begin with the raw amino-acid sequence, 271 residues long: Very long chain fatty acid elongase 3 (271 aa).

N-linked (GlcNAc...) asparagine glycosylation is present at Asn6. The next 7 membrane-spanning stretches (helical) occupy residues 30-50, 67-87, 116-136, 141-161, 165-187, 199-219, and 236-256; these read FLEEYWVSSFLIVVVYLLLIV, PLILWSFFLAIFSILGTLRMW, FWSFLFLLSKVVELGDTAFII, PLIFVHWYHHSTVLLFTSFGY, VPSGGWFMTMNFGVHSVMYTYYT, LPMVITSLQILQMVLGTIFGI, and HFFWSFMLYGTYFILFAHFFH.

It belongs to the ELO family. ELOVL3 subfamily. Interacts with TECR. N-Glycosylated. Expressed in brown adipose tissue and liver. In the skin, strong expressed in the cells of the inner layer of the outer root sheath of the hair follicles and in the sebocytes of the sebaceous glands. Hardly detectable in the epidermis and not at all in fibroblasts.

Its subcellular location is the endoplasmic reticulum membrane. The catalysed reaction is a very-long-chain acyl-CoA + malonyl-CoA + H(+) = a very-long-chain 3-oxoacyl-CoA + CO2 + CoA. The enzyme catalyses eicosanoyl-CoA + malonyl-CoA + H(+) = 3-oxodocosanoyl-CoA + CO2 + CoA. It catalyses the reaction hexadecanoyl-CoA + malonyl-CoA + H(+) = 3-oxooctadecanoyl-CoA + CO2 + CoA. It carries out the reaction octadecanoyl-CoA + malonyl-CoA + H(+) = 3-oxoeicosanoyl-CoA + CO2 + CoA. The catalysed reaction is (9Z)-octadecenoyl-CoA + malonyl-CoA + H(+) = 3-oxo-(11Z)-eicosenoyl-CoA + CO2 + CoA. The enzyme catalyses (9Z,12Z)-octadecadienoyl-CoA + malonyl-CoA + H(+) = (11Z,14Z)-3-oxoicosa-11,14-dienoyl-CoA + CO2 + CoA. It catalyses the reaction (9Z,12Z,15Z)-octadecatrienoyl-CoA + malonyl-CoA + H(+) = (11Z,14Z,17Z)-3-oxoeicosatrienoyl-CoA + CO2 + CoA. It carries out the reaction docosanoyl-CoA + malonyl-CoA + H(+) = 3-oxotetracosanoyl-CoA + CO2 + CoA. The catalysed reaction is tetradecanoyl-CoA + malonyl-CoA + H(+) = 3-oxohexadecanoyl-CoA + CO2 + CoA. Its pathway is lipid metabolism; polyunsaturated fatty acid biosynthesis. In terms of biological role, catalyzes the first and rate-limiting reaction of the four reactions that constitute the long-chain fatty acids elongation cycle. This endoplasmic reticulum-bound enzymatic process allows the addition of 2 carbons to the chain of long- and very long-chain fatty acids (VLCFAs) per cycle. Condensing enzyme that exhibits activity toward saturated and unsaturated acyl-CoA substrates with higher activity toward C18 acyl-CoAs, especially C18:0 acyl-CoAs. May participate in the production of saturated and monounsaturated VLCFAs of different chain lengths that are involved in multiple biological processes as precursors of membrane lipids and lipid mediators. Participates in the formation of certain VLCFA and triglycerides in certain cells of the hair follicles and the sebaceous glands, required for skin barrier function. Critical enzyme for lipid accumulation and metabolic activity in brown adipocytes during the early phase of the tissue recruitment. Plays a role in lipid storage and in resistance to diet-induced obesity. The sequence is that of Very long chain fatty acid elongase 3 from Mus musculus (Mouse).